The sequence spans 156 residues: Ribonuclease pancreatic (156 aa).

The signal sequence occupies residues 1–26 (MGLEKSLVFFPLLVLLALGWVQPCLG). 2 residues coordinate substrate: Lys33 and Arg36. The active-site Proton acceptor is His38. 4 disulfide bridges follow: Cys54/Cys112, Cys68/Cys123, Cys86/Cys138, and Cys93/Cys100. 69 to 73 (KPVNT) serves as a coordination point for substrate. N-linked (GlcNAc...) asparagine glycosylation is present at Asn90. 2 residues coordinate substrate: Lys94 and Arg113. The active-site Proton donor is the His147.

This sequence belongs to the pancreatic ribonuclease family. In terms of assembly, monomer. Interacts with and forms tight 1:1 complexes with RNH1. Dimerization of two such complexes may occur. Interaction with RNH1 inhibits this protein. In terms of tissue distribution, pancreas.

It localises to the secreted. The enzyme catalyses an [RNA] containing cytidine + H2O = an [RNA]-3'-cytidine-3'-phosphate + a 5'-hydroxy-ribonucleotide-3'-[RNA].. It catalyses the reaction an [RNA] containing uridine + H2O = an [RNA]-3'-uridine-3'-phosphate + a 5'-hydroxy-ribonucleotide-3'-[RNA].. In terms of biological role, endonuclease that catalyzes the cleavage of RNA on the 3' side of pyrimidine nucleotides. Acts on single-stranded and double-stranded RNA. The sequence is that of Ribonuclease pancreatic (RNASE1) from Glis glis (Fat dormouse).